Here is a 612-residue protein sequence, read N- to C-terminus: Glutamine--fructose-6-phosphate aminotransferase [isomerizing] (612 aa).

Cys-2 serves as the catalytic Nucleophile; for GATase activity. The region spanning 2-221 (CGIVGIVSQR…NGDIAEITNS (220 aa)) is the Glutamine amidotransferase type-2 domain. SIS domains are found at residues 289–429 (FNKT…IRKI) and 461–602 (LVKN…VDHP). The active-site For Fru-6P isomerization activity is Lys-607.

As to quaternary structure, homodimer.

The protein localises to the cytoplasm. The catalysed reaction is D-fructose 6-phosphate + L-glutamine = D-glucosamine 6-phosphate + L-glutamate. In terms of biological role, catalyzes the first step in hexosamine metabolism, converting fructose-6P into glucosamine-6P using glutamine as a nitrogen source. This is Glutamine--fructose-6-phosphate aminotransferase [isomerizing] from Wigglesworthia glossinidia brevipalpis.